Consider the following 1773-residue polypeptide: Plexin-2 (1773 aa).

Residues Met1 to Ala19 form the signal peptide. One can recognise a Sema domain in the interval Ala20–Leu436. The Extracellular portion of the chain corresponds to Ala20–Ser1130. Asn65 is a glycosylation site (N-linked (GlcNAc...) asparagine). 9 disulfide bridges follow: Cys83–Cys90, Cys117–Cys125, Cys239–Cys341, Cys255–Cys292, Cys310–Cys328, Cys439–Cys456, Cys445–Cys479, Cys448–Cys465, and Cys459–Cys471. The N-linked (GlcNAc...) asparagine glycan is linked to Asn241. Residues Thr438–Pro480 enclose the PSI 1 domain. The N-linked (GlcNAc...) asparagine glycan is linked to Asn494. The cysteines at positions 516 and 538 are disulfide-linked. Residue Asn566 is glycosylated (N-linked (GlcNAc...) asparagine). Residues Asp571 to Val608 enclose the PSI 2 domain. Asn670 and Asn693 each carry an N-linked (GlcNAc...) asparagine glycan. The PSI 3 domain maps to Ser698–Asp739. 3 IPT/TIG domains span residues Pro741–Val829, Val831–Arg916, and Pro919–Asp1006. N-linked (GlcNAc...) asparagine glycosylation is found at Asn855, Asn877, Asn975, and Asn1007. The chain crosses the membrane as a helical span at residues Phe1131–Phe1151. A coiled-coil region spans residues Ile1150–Gln1188. At Lys1152–His1764 the chain is on the cytoplasmic side.

The protein belongs to the plexin family. In terms of assembly, interacts with mab-20.

Its subcellular location is the cell membrane. Functionally, involved as a receptor for mab-20/sema-2a in the formation or stabilization of cell-cell contacts at several stages of epithelial morphogenesis. In early embryonic development, required for proper ventral closure of the epidermis. During male tail morphogenesis, involved in precursor cell sorting and in the formation of distinct sensory rays. Involved in axon guidance of SDQL neurons during neurogenesis. This Caenorhabditis briggsae protein is Plexin-2 (plx-2).